The sequence spans 145 residues: Protein BUD31 homolog 1 (145 aa).

This sequence belongs to the BUD31 (G10) family.

It localises to the nucleus. The protein is Protein BUD31 homolog 1 of Oryza sativa subsp. japonica (Rice).